Reading from the N-terminus, the 567-residue chain is Proline--tRNA ligase (567 aa).

Belongs to the class-II aminoacyl-tRNA synthetase family. ProS type 1 subfamily. Homodimer.

It localises to the cytoplasm. The catalysed reaction is tRNA(Pro) + L-proline + ATP = L-prolyl-tRNA(Pro) + AMP + diphosphate. Functionally, catalyzes the attachment of proline to tRNA(Pro) in a two-step reaction: proline is first activated by ATP to form Pro-AMP and then transferred to the acceptor end of tRNA(Pro). As ProRS can inadvertently accommodate and process non-cognate amino acids such as alanine and cysteine, to avoid such errors it has two additional distinct editing activities against alanine. One activity is designated as 'pretransfer' editing and involves the tRNA(Pro)-independent hydrolysis of activated Ala-AMP. The other activity is designated 'posttransfer' editing and involves deacylation of mischarged Ala-tRNA(Pro). The misacylated Cys-tRNA(Pro) is not edited by ProRS. In Staphylococcus aureus (strain MRSA252), this protein is Proline--tRNA ligase.